Here is a 265-residue protein sequence, read N- to C-terminus: Ribosomal RNA small subunit methyltransferase A (265 aa).

The S-adenosyl-L-methionine site is built by asparagine 13, leucine 15, glycine 39, glutamate 59, aspartate 87, and asparagine 108.

This sequence belongs to the class I-like SAM-binding methyltransferase superfamily. rRNA adenine N(6)-methyltransferase family. RsmA subfamily.

Its subcellular location is the cytoplasm. It catalyses the reaction adenosine(1518)/adenosine(1519) in 16S rRNA + 4 S-adenosyl-L-methionine = N(6)-dimethyladenosine(1518)/N(6)-dimethyladenosine(1519) in 16S rRNA + 4 S-adenosyl-L-homocysteine + 4 H(+). Its function is as follows. Specifically dimethylates two adjacent adenosines (A1518 and A1519) in the loop of a conserved hairpin near the 3'-end of 16S rRNA in the 30S particle. May play a critical role in biogenesis of 30S subunits. This Aliarcobacter butzleri (strain RM4018) (Arcobacter butzleri) protein is Ribosomal RNA small subunit methyltransferase A.